The following is a 1293-amino-acid chain: Phosphoribosylformylglycinamidine synthase (1293 aa).

Residues 305 to 316, 384 to 386, and Ala-676 each bind ATP; these read GAATGSGGEIRD and TGY. The disordered stretch occupies residues 307 to 326; the sequence is ATGSGGEIRDEGATGRGSKP. Mg(2+)-binding residues include Asp-677, Glu-716, Asn-720, and Asp-884. Ser-886 contacts ATP. Residues 1040–1293 form the Glutamine amidotransferase type-1 domain; it reads MAILREQGVN…MFRNARVKIG (254 aa). Catalysis depends on Cys-1133, which acts as the Nucleophile. Active-site residues include His-1258 and Glu-1260.

In the N-terminal section; belongs to the FGAMS family. As to quaternary structure, monomer.

Its subcellular location is the cytoplasm. The enzyme catalyses N(2)-formyl-N(1)-(5-phospho-beta-D-ribosyl)glycinamide + L-glutamine + ATP + H2O = 2-formamido-N(1)-(5-O-phospho-beta-D-ribosyl)acetamidine + L-glutamate + ADP + phosphate + H(+). It functions in the pathway purine metabolism; IMP biosynthesis via de novo pathway; 5-amino-1-(5-phospho-D-ribosyl)imidazole from N(2)-formyl-N(1)-(5-phospho-D-ribosyl)glycinamide: step 1/2. Its function is as follows. Phosphoribosylformylglycinamidine synthase involved in the purines biosynthetic pathway. Catalyzes the ATP-dependent conversion of formylglycinamide ribonucleotide (FGAR) and glutamine to yield formylglycinamidine ribonucleotide (FGAM) and glutamate. This chain is Phosphoribosylformylglycinamidine synthase, found in Shewanella frigidimarina (strain NCIMB 400).